Consider the following 245-residue polypeptide: 2,3-bisphosphoglycerate-dependent phosphoglycerate mutase (245 aa).

Substrate is bound by residues 8-15 (RHGQSLWN), 21-22 (TG), arginine 60, 87-90 (ERHY), lysine 98, 114-115 (RR), and 183-184 (GN). The active-site Tele-phosphohistidine intermediate is the histidine 9. Glutamate 87 serves as the catalytic Proton donor/acceptor.

Belongs to the phosphoglycerate mutase family. BPG-dependent PGAM subfamily.

The enzyme catalyses (2R)-2-phosphoglycerate = (2R)-3-phosphoglycerate. The protein operates within carbohydrate degradation; glycolysis; pyruvate from D-glyceraldehyde 3-phosphate: step 3/5. Functionally, catalyzes the interconversion of 2-phosphoglycerate and 3-phosphoglycerate. The chain is 2,3-bisphosphoglycerate-dependent phosphoglycerate mutase from Bacillus cereus (strain AH187).